The chain runs to 261 residues: Leucine-rich repeat-containing protein 61 (261 aa).

3 LRR repeats span residues 54 to 75, 76 to 97, and 98 to 119; these read GLEWLDLSGNALTQLGPLASLR, QLAVLNVADNRLTGLEPLAACE, and NLQCLNAAGNLLAGPAQLQCLA. The LRRCT domain occupies 138–183; that stretch reads NPLCASPCYWASVRELLPGLKVLDGERVSGRGSDFYQLCRDLDSSL.

In Bos taurus (Bovine), this protein is Leucine-rich repeat-containing protein 61 (LRRC61).